The sequence spans 415 residues: Lipid II:glycine glycyltransferase (415 aa).

This sequence belongs to the FemABX family.

It localises to the cytoplasm. It carries out the reaction beta-D-GlcNAc-(1-&gt;4)-Mur2Ac(oyl-L-Ala-D-isoglutaminyl-L-Lys-D-Ala-D-Ala)-di-trans,octa-cis-undecaprenyl diphosphate + glycyl-tRNA(Gly) = beta-D-GlcNAc-(1-&gt;4)-Mur2Ac(oyl-L-Ala-D-isoglutaminyl-L-Lys-(N(6)-Gly)-D-Ala-D-Ala)-di-trans,octa-cis-undecaprenyl diphosphate + tRNA(Gly) + H(+). Functionally, catalyzes the incorporation of amino acid(s) into the interchain peptide bridge of peptidoglycan, using aminoacyl-tRNA as amino acid donor. The polypeptide is Lipid II:glycine glycyltransferase (femX) (Staphylococcus saprophyticus subsp. saprophyticus (strain ATCC 15305 / DSM 20229 / NCIMB 8711 / NCTC 7292 / S-41)).